The following is a 371-amino-acid chain: tRNA-specific 2-thiouridylase MnmA (371 aa).

ATP contacts are provided by residues 12–19 (GMSGGVDS) and M38. The interval 98-100 (NPD) is interaction with target base in tRNA. C103 serves as the catalytic Nucleophile. C103 and C200 form a disulfide bridge. Position 127 (G127) interacts with ATP. Residues 150-152 (KDQ) are interaction with tRNA. Catalysis depends on C200, which acts as the Cysteine persulfide intermediate. Positions 308-309 (RY) are interaction with tRNA.

The protein belongs to the MnmA/TRMU family.

It is found in the cytoplasm. It carries out the reaction S-sulfanyl-L-cysteinyl-[protein] + uridine(34) in tRNA + AH2 + ATP = 2-thiouridine(34) in tRNA + L-cysteinyl-[protein] + A + AMP + diphosphate + H(+). Functionally, catalyzes the 2-thiolation of uridine at the wobble position (U34) of tRNA, leading to the formation of s(2)U34. This chain is tRNA-specific 2-thiouridylase MnmA, found in Oceanobacillus iheyensis (strain DSM 14371 / CIP 107618 / JCM 11309 / KCTC 3954 / HTE831).